We begin with the raw amino-acid sequence, 461 residues long: GTPase Der (461 aa).

2 EngA-type G domains span residues 2-164 and 197-368; these read QKII…EDDV and IRVG…KNFT. Residues 8–15, 55–59, 116–119, 203–210, 250–254, and 314–317 contribute to the GTP site; these read GKPNVGKS, DSGGL, NKID, GRVNVGKS, DTAGI, and NKWD. The KH-like domain maps to 369-453; that stretch reads QKIQTSKLNE…PIVLAPKKRG (85 aa).

The protein belongs to the TRAFAC class TrmE-Era-EngA-EngB-Septin-like GTPase superfamily. EngA (Der) GTPase family. In terms of assembly, associates with the 50S ribosomal subunit.

Functionally, GTPase that plays an essential role in the late steps of ribosome biogenesis. This chain is GTPase Der, found in Campylobacter curvus (strain 525.92).